Reading from the N-terminus, the 336-residue chain is tRNA N6-adenosine threonylcarbamoyltransferase (336 aa).

Fe cation is bound by residues His112 and His116. Substrate contacts are provided by residues 136–140 (LVSGG), Asp169, Gly182, and Asn276. Position 304 (Asp304) interacts with Fe cation.

It belongs to the KAE1 / TsaD family. Requires Fe(2+) as cofactor.

The protein localises to the cytoplasm. The catalysed reaction is L-threonylcarbamoyladenylate + adenosine(37) in tRNA = N(6)-L-threonylcarbamoyladenosine(37) in tRNA + AMP + H(+). Functionally, required for the formation of a threonylcarbamoyl group on adenosine at position 37 (t(6)A37) in tRNAs that read codons beginning with adenine. Is involved in the transfer of the threonylcarbamoyl moiety of threonylcarbamoyl-AMP (TC-AMP) to the N6 group of A37, together with TsaE and TsaB. TsaD likely plays a direct catalytic role in this reaction. This chain is tRNA N6-adenosine threonylcarbamoyltransferase, found in Francisella tularensis subsp. holarctica (strain LVS).